Consider the following 131-residue polypeptide: Large ribosomal subunit protein bL12 (131 aa).

The protein belongs to the bacterial ribosomal protein bL12 family. In terms of assembly, homodimer. Part of the ribosomal stalk of the 50S ribosomal subunit. Forms a multimeric L10(L12)X complex, where L10 forms an elongated spine to which 2 to 4 L12 dimers bind in a sequential fashion. Binds GTP-bound translation factors.

Functionally, forms part of the ribosomal stalk which helps the ribosome interact with GTP-bound translation factors. Is thus essential for accurate translation. The protein is Large ribosomal subunit protein bL12 of Prochlorococcus marinus subsp. pastoris (strain CCMP1986 / NIES-2087 / MED4).